Consider the following 420-residue polypeptide: Tyrosine--tRNA ligase (420 aa).

Tyrosine 39 contributes to the L-tyrosine binding site. Residues 44 to 53 (CTAPSLHIGS) carry the 'HIGH' region motif. 2 residues coordinate L-tyrosine: tyrosine 176 and glutamine 180. The 'KMSKS' region signature appears at 236 to 240 (KMGKT). Lysine 239 is an ATP binding site. The S4 RNA-binding domain occupies 349 to 414 (IPLIDLLYDT…AGKKRHIKIL (66 aa)).

The protein belongs to the class-I aminoacyl-tRNA synthetase family. TyrS type 1 subfamily. As to quaternary structure, homodimer.

The protein localises to the cytoplasm. It catalyses the reaction tRNA(Tyr) + L-tyrosine + ATP = L-tyrosyl-tRNA(Tyr) + AMP + diphosphate + H(+). Functionally, catalyzes the attachment of tyrosine to tRNA(Tyr) in a two-step reaction: tyrosine is first activated by ATP to form Tyr-AMP and then transferred to the acceptor end of tRNA(Tyr). The polypeptide is Tyrosine--tRNA ligase (Wolbachia pipientis subsp. Culex pipiens (strain wPip)).